Consider the following 148-residue polypeptide: Small ribosomal subunit protein eS12B (148 aa).

Belongs to the eukaryotic ribosomal protein eS12 family. As to quaternary structure, component of the small ribosomal subunit (SSU). Mature yeast ribosomes consist of a small (40S) and a large (60S) subunit. The 40S small subunit contains 1 molecule of ribosomal RNA (18S rRNA) and at least 33 different proteins. The large 60S subunit contains 3 rRNA molecules (25S, 5.8S and 5S rRNA) and at least 46 different proteins.

The protein localises to the cytoplasm. Its function is as follows. Component of the ribosome, a large ribonucleoprotein complex responsible for the synthesis of proteins in the cell. The small ribosomal subunit (SSU) binds messenger RNAs (mRNAs) and translates the encoded message by selecting cognate aminoacyl-transfer RNA (tRNA) molecules. The large subunit (LSU) contains the ribosomal catalytic site termed the peptidyl transferase center (PTC), which catalyzes the formation of peptide bonds, thereby polymerizing the amino acids delivered by tRNAs into a polypeptide chain. The nascent polypeptides leave the ribosome through a tunnel in the LSU and interact with protein factors that function in enzymatic processing, targeting, and the membrane insertion of nascent chains at the exit of the ribosomal tunnel. The polypeptide is Small ribosomal subunit protein eS12B (rps1202) (Schizosaccharomyces pombe (strain 972 / ATCC 24843) (Fission yeast)).